A 391-amino-acid chain; its full sequence is Sister chromatid cohesion protein DCC1 (391 aa).

This sequence belongs to the DCC1 family. Component of the ctf18-RFC complex which consists of ctf18, ctf8, dscc1 and the RFC complex.

The protein resides in the nucleus. Loads pcna onto primed templates regulating velocity, spacing and restart activity of replication forks. May couple DNA replication to sister chromatid cohesion. This is Sister chromatid cohesion protein DCC1 (dscc1) from Xenopus tropicalis (Western clawed frog).